The primary structure comprises 258 residues: Deoxyribose-phosphate aldolase (258 aa).

Catalysis depends on D101, which acts as the Proton donor/acceptor. The active-site Schiff-base intermediate with acetaldehyde is K166. Residue K200 is the Proton donor/acceptor of the active site.

The protein belongs to the DeoC/FbaB aldolase family. DeoC type 2 subfamily.

It is found in the cytoplasm. It carries out the reaction 2-deoxy-D-ribose 5-phosphate = D-glyceraldehyde 3-phosphate + acetaldehyde. It functions in the pathway carbohydrate degradation; 2-deoxy-D-ribose 1-phosphate degradation; D-glyceraldehyde 3-phosphate and acetaldehyde from 2-deoxy-alpha-D-ribose 1-phosphate: step 2/2. Its function is as follows. Catalyzes a reversible aldol reaction between acetaldehyde and D-glyceraldehyde 3-phosphate to generate 2-deoxy-D-ribose 5-phosphate. The sequence is that of Deoxyribose-phosphate aldolase from Actinobacillus pleuropneumoniae serotype 3 (strain JL03).